We begin with the raw amino-acid sequence, 129 residues long: Follitropin subunit beta (129 aa).

Residues 1-18 (MKTLQFFFLFCCWKAICC) form the signal peptide. Disulfide bonds link Cys-21–Cys-69, Cys-35–Cys-84, Cys-38–Cys-122, Cys-46–Cys-100, Cys-50–Cys-102, and Cys-105–Cys-112. N-linked (GlcNAc...) asparagine glycans are attached at residues Asn-25 and Asn-42.

The protein belongs to the glycoprotein hormones subunit beta family. As to quaternary structure, heterodimer. The active follitropin is a heterodimer composed of an alpha chain/CGA shared with other hormones and a unique beta chain/FSHB shown here.

It is found in the secreted. Together with the alpha chain CGA constitutes follitropin, the follicle-stimulating hormone, and provides its biological specificity to the hormone heterodimer. Binds FSHR, a G protein-coupled receptor, on target cells to activate downstream signaling pathways. Follitropin is involved in follicle development and spermatogenesis in reproductive organs. In Homo sapiens (Human), this protein is Follitropin subunit beta (FSHB).